Here is a 1385-residue protein sequence, read N- to C-terminus: DNA-directed RNA polymerase subunit beta (1385 aa).

This sequence belongs to the RNA polymerase beta chain family. As to quaternary structure, the RNAP catalytic core consists of 2 alpha, 1 beta, 1 beta' and 1 omega subunit. When a sigma factor is associated with the core the holoenzyme is formed, which can initiate transcription.

The enzyme catalyses RNA(n) + a ribonucleoside 5'-triphosphate = RNA(n+1) + diphosphate. DNA-dependent RNA polymerase catalyzes the transcription of DNA into RNA using the four ribonucleoside triphosphates as substrates. This Sulfurovum sp. (strain NBC37-1) protein is DNA-directed RNA polymerase subunit beta.